Reading from the N-terminus, the 424-residue chain is Serine/threonine-protein kinase H1 (424 aa).

A lipid anchor (N-myristoyl glycine) is attached at Gly-2. Cys-3 carries the S-palmitoyl cysteine lipid modification. The disordered stretch occupies residues 56–80 (SQYAHPCPGPPTAGHTEPPSEPPRR). Residues 98-355 (YDIKALIGRG…ALQALRHPWV (258 aa)) form the Protein kinase domain. ATP-binding positions include 104–112 (IGRGSFSRV) and Lys-127. Asp-218 serves as the catalytic Proton acceptor. Residues 378–407 (RASSRCQSTKSAQSTRSSRSTRSNKSRRVR) are disordered. Ser-380 and Ser-381 each carry phosphoserine; by autocatalysis. Low complexity predominate over residues 385–398 (STKSAQSTRSSRST).

This sequence belongs to the protein kinase superfamily. CAMK Ser/Thr protein kinase family. Homodimer. Autophosphorylated on serine residues. Post-translationally, myristoylated. Required for membrane association. Prerequisite for palmitoylation to occur. In terms of processing, palmitoylated. As to expression, expressed in all tissues and cell lines tested with the highest level of abundance in testis.

It localises to the golgi apparatus. It is found in the cytoplasm. Its subcellular location is the cytoskeleton. The protein resides in the microtubule organizing center. The protein localises to the centrosome. It localises to the nucleus speckle. It is found in the endoplasmic reticulum membrane. Its subcellular location is the cell membrane. The catalysed reaction is L-seryl-[protein] + ATP = O-phospho-L-seryl-[protein] + ADP + H(+). The enzyme catalyses L-threonyl-[protein] + ATP = O-phospho-L-threonyl-[protein] + ADP + H(+). Its activity is regulated as follows. Activity depends on Ca(2+) concentration. Functionally, serine/threonine protein kinase that may be involved in the regulation of pre-mRNA processing. It may phosphorylate components of nuclear splice factor compartments (SFC), such as non-snRNP splicing factors containing a serine/arginine-rich domain (SR proteins). Reversible phosphorylation of SR proteins may cause their release into the nucleoplasm and change their local concentration, thereby influencing alternative splicing. The chain is Serine/threonine-protein kinase H1 (PSKH1) from Homo sapiens (Human).